We begin with the raw amino-acid sequence, 409 residues long: O-methyltransferase pyiA (409 aa).

Residues 1–21 (MASQDGTTELLSQSVNSTCIP) are compositionally biased toward polar residues. A disordered region spans residues 1–46 (MASQDGTTELLSQSVNSTCIPGSTYHVDRGRASSASTPPTSPPLSE). S-adenosyl-L-methionine is bound at residue Asp-271. Catalysis depends on His-317, which acts as the Proton acceptor.

Belongs to the class I-like SAM-binding methyltransferase superfamily. Cation-independent O-methyltransferase family.

It participates in mycotoxin biosynthesis. O-methyltransferase; part of the gene cluster that mediates the biosynthesis of the mycotoxin pyrichalasin H, a tyrosine-derived cytochalasan that inhibits the growth of rice seedlings, but also inhibits lymphocyte capping and actin polymerization and alters cell morphology. Pyrichalasin H is indicated as the responsible agent for the genus-specific pathogenicity of M.grisea toward crabgrass. The first step in the pathway is catalyzed by the O-methyltransferase pyiA which methylates free tyrosine to generate the precursor O-methyltyrosine. The hybrid PKS-NRPS pyiS, assisted by the enoyl reductase pyiC, are responsible for fusion of the O-methyltyrosine precursor and the polyketide backbone. The polyketide synthase module (PKS) of pyiS is responsible for the synthesis of the polyketide backbone and the downstream nonribosomal peptide synthetase (NRPS) amidates the carboxyl end of the polyketide with the O-methyltyrosine precursor. As the NRPS A-domain demonstrates substrate tolerance, pyiS can also use phenylalanine, tyrosine and even para-chlorophenylalanine as amino acid precursor, which leads to the production of novel cytochalasans, including halogenated cytochalasans. Because pyiS lacks a designated enoylreductase (ER) domain, the required activity is provided the enoyl reductase pyiC. Reduction by the hydrolyase pyiE leads to 1,5-dihydropyrrolone, which is substrate for dehydration and intra-molecular Diels-Alder cyclization by the Diels-Alderase pyiF to yield the required isoindolone-fused macrocycle. The tailoring cytochrome P450 monooxygenases piyD and piyG catalyze the hydroxylation at C-18 and C-7, respectivily, whereas the short-chain dehydrogenase/reductase pyiH reduces the carbonyl at C-21 in preparation for the transfer of an acetyl group by the acetyltransferase pyiB. These 3 reactions whose order is not clear yet, lead to the production of O-methylpyrichalasin J, a deacetylated pyrichalasin H. Finally, pyiB to converts O-methylpyrichalasin J into the final product pyrichalasin H via acetylation of C-21. The protein is O-methyltransferase pyiA of Pyricularia grisea (Crabgrass-specific blast fungus).